The chain runs to 258 residues: Proteasome subunit alpha (258 aa).

This sequence belongs to the peptidase T1A family. In terms of assembly, the 20S proteasome core is composed of 14 alpha and 14 beta subunits that assemble into four stacked heptameric rings, resulting in a barrel-shaped structure. The two inner rings, each composed of seven catalytic beta subunits, are sandwiched by two outer rings, each composed of seven alpha subunits. The catalytic chamber with the active sites is on the inside of the barrel. Has a gated structure, the ends of the cylinder being occluded by the N-termini of the alpha-subunits. Is capped at one or both ends by the proteasome regulatory ATPase, PAN.

The protein localises to the cytoplasm. Its activity is regulated as follows. The formation of the proteasomal ATPase PAN-20S proteasome complex, via the docking of the C-termini of PAN into the intersubunit pockets in the alpha-rings, triggers opening of the gate for substrate entry. Interconversion between the open-gate and close-gate conformations leads to a dynamic regulation of the 20S proteasome proteolysis activity. In terms of biological role, component of the proteasome core, a large protease complex with broad specificity involved in protein degradation. This chain is Proteasome subunit alpha, found in Aeropyrum pernix (strain ATCC 700893 / DSM 11879 / JCM 9820 / NBRC 100138 / K1).